The sequence spans 58 residues: UPF0391 membrane protein Plav_0056 (58 aa).

2 consecutive transmembrane segments (helical) span residues 4–24 and 30–50; these read WAAV…GGLV and IAQI…IFGV.

It belongs to the UPF0391 family.

It localises to the cell membrane. This chain is UPF0391 membrane protein Plav_0056, found in Parvibaculum lavamentivorans (strain DS-1 / DSM 13023 / NCIMB 13966).